Reading from the N-terminus, the 357-residue chain is Protein pelota homolog (357 aa).

Belongs to the eukaryotic release factor 1 family. Pelota subfamily. As to quaternary structure, monomer. A divalent metal cation is required as a cofactor.

The protein localises to the cytoplasm. Functionally, may function in recognizing stalled ribosomes, interact with stem-loop structures in stalled mRNA molecules, and effect endonucleolytic cleavage of the mRNA. May play a role in the release non-functional ribosomes and degradation of damaged mRNAs. Has endoribonuclease activity. The protein is Protein pelota homolog of Methanocella arvoryzae (strain DSM 22066 / NBRC 105507 / MRE50).